Here is a 506-residue protein sequence, read N- to C-terminus: Acrylate reductase flavoprotein subunit (506 aa).

The tat-type signal signal peptide spans 1–30 (MSNKDLLGRRNFIKGMGAAAGVAMAAPALA). A54, E74, N82, G87, and G88 together coordinate FAD. R333 serves as the catalytic Proton donor. FAD contacts are provided by E473 and I489.

Belongs to the FAD-dependent oxidoreductase 2 family. FRD/SDH subfamily. The ArdAB flavocytochrome c is composed of a FAD-containing subunit (ArdA) and a heme c-containing subunit (ArdB). FAD is required as a cofactor. In terms of processing, predicted to be exported by the Tat system. The position of the signal peptide cleavage has not been experimentally proven.

It localises to the periplasm. Its activity is regulated as follows. Methacrylate acts as a competitive inhibitor of the acrylate reductase activity and suppresses the reductase activity in dose-dependent manner. Its function is as follows. FAD-containing subunit of the ArdAB flavocytochrome c, which catalyzes the reduction of acrylate to propanoate and supports dimethylsulfoniopropionate-dependent anaerobic respiration. In vitro, can use the artificial electron donor methyl viologen. The natural electron donor is probably a low-potential cytochrome c. Also shows weak activity toward methacrylate in vitro (at a 22-fold lower rate) but cannot use other tested 2-enoates, including crotonic, fumaric, sorbic, urocanic, cinnamic, p-coumaric, caffeic or ferulic acids. The protein catalyzes a unidirectional reaction and cannot oxidize propanoate with phenazine metasulfate and dichlorophenolindophenol as electron acceptors. The sequence is that of Acrylate reductase flavoprotein subunit from Shewanella woodyi (strain ATCC 51908 / MS32).